The chain runs to 400 residues: Elongation factor Tu (400 aa).

The tr-type G domain maps to 10-208; sequence KPHMNVGTIG…AMDSYFPDPV (199 aa). A G1 region spans residues 19–26; that stretch reads GHIDHGKT. 19 to 26 contacts GTP; that stretch reads GHIDHGKT. A Mg(2+)-binding site is contributed by Thr26. The interval 60–64 is G2; it reads GITIN. A G3 region spans residues 81–84; sequence DCPG. GTP-binding positions include 81-85 and 136-139; these read DCPGH and NKVD. A G4 region spans residues 136–139; the sequence is NKVD. A G5 region spans residues 174–176; that stretch reads SAL.

This sequence belongs to the TRAFAC class translation factor GTPase superfamily. Classic translation factor GTPase family. EF-Tu/EF-1A subfamily. In terms of assembly, monomer.

It is found in the cytoplasm. The catalysed reaction is GTP + H2O = GDP + phosphate + H(+). Functionally, GTP hydrolase that promotes the GTP-dependent binding of aminoacyl-tRNA to the A-site of ribosomes during protein biosynthesis. In Fervidobacterium nodosum (strain ATCC 35602 / DSM 5306 / Rt17-B1), this protein is Elongation factor Tu.